The primary structure comprises 1043 residues: Phosphatidylinositol 4,5-bisphosphate 3-kinase catalytic subunit delta isoform (1043 aa).

One can recognise a PI3K-ABD domain in the interval 16 to 105; sequence ESQSVVVDFL…LPVLRLVARE (90 aa). Residues 187–278 form the PI3K-RBD domain; it reads NRALLVNVKF…GLTPHLTMVH (92 aa). The disordered stretch occupies residues 287-312; sequence DEQSNPAPQVQKPRAKPPPIPAKKPS. In terms of domain architecture, C2 PI3K-type spans 319–476; that stretch reads LEQPFSIELI…SAAALVIYLP (158 aa). The region spanning 496-673 is the PIK helical domain; that stretch reads RHGERGRITE…GLIMEAYCRG (178 aa). Position 523 is a phosphotyrosine (Tyr523). The region spanning 744–1026 is the PI3K/PI4K catalytic domain; the sequence is CVEQCTFMDS…KFNEALRESW (283 aa). A G-loop region spans residues 750-756; the sequence is FMDSKMK. The catalytic loop stretch occupies residues 889-897; that stretch reads GIGDRHSDN. The tract at residues 908–934 is activation loop; sequence HIDFGHFLGNFKTKFGINRERVPFILT. Ser1038 carries the post-translational modification Phosphoserine; by autocatalysis.

It belongs to the PI3/PI4-kinase family. In terms of assembly, heterodimer of a catalytic subunit PIK3CD and a p85 regulatory subunit (PIK3R1, PIK3R2 or PIK3R3). Interacts with ERAS and HRAS. Post-translationally, autophosphorylation on Ser-1038 results in the almost complete inactivation of the lipid kinase activity. Abundantly expressed in adult mouse spleen as well as in testis. Isoform 1 is expressed in spleen and lung (at protein level). Isoform 1 is expressed predominantly in leukocytes.

It localises to the cytoplasm. The catalysed reaction is a 1,2-diacyl-sn-glycero-3-phospho-(1D-myo-inositol-4,5-bisphosphate) + ATP = a 1,2-diacyl-sn-glycero-3-phospho-(1D-myo-inositol-3,4,5-trisphosphate) + ADP + H(+). The enzyme catalyses a 1,2-diacyl-sn-glycero-3-phospho-(1D-myo-inositol) + ATP = a 1,2-diacyl-sn-glycero-3-phospho-(1D-myo-inositol-3-phosphate) + ADP + H(+). It carries out the reaction 1-octadecanoyl-2-(5Z,8Z,11Z,14Z)-eicosatetraenoyl-sn-glycero-3-phospho-1D-myo-inositol 4,5-bisphosphate + ATP = 1-octadecanoyl-2-(5Z,8Z,11Z,14Z-eicosatetraenoyl)-sn-glycero-3-phospho-(1D-myo-inositol 3,4,5-triphosphate) + ADP + H(+). It participates in phospholipid metabolism; phosphatidylinositol phosphate biosynthesis. With respect to regulation, activated by growth factors and cytokine receptors through a tyrosine-kinase-dependent mechanism. Activated by RAS. IC87114 inhibits lipid kinase activity and is selective in cells at doses up to 5-10 uM. Among other effects, IC87114 reduces allergic responses, prevents the recruitment of antigen-specific T cells into target tissue, and affects natural killer cell chemotaxis. Its function is as follows. Phosphoinositide-3-kinase (PI3K) phosphorylates phosphatidylinositol (PI) and its phosphorylated derivatives at position 3 of the inositol ring to produce 3-phosphoinositides. Uses ATP and PtdIns(4,5)P2 (phosphatidylinositol 4,5-bisphosphate) to generate phosphatidylinositol 3,4,5-trisphosphate (PIP3). PIP3 plays a key role by recruiting PH domain-containing proteins to the membrane, including AKT1 and PDPK1, activating signaling cascades involved in cell growth, survival, proliferation, motility and morphology. Mediates immune responses. Plays a role in B-cell development, proliferation, migration, and function. Required for B-cell receptor (BCR) signaling. Mediates B-cell proliferation response to anti-IgM, anti-CD40 and IL4 stimulation. Promotes cytokine production in response to TLR4 and TLR9. Required for antibody class switch mediated by TLR9. Involved in the antigen presentation function of B-cells. Involved in B-cell chemotaxis in response to CXCL13 and sphingosine 1-phosphate (S1P). Required for proliferation, signaling and cytokine production of naive, effector and memory T-cells. Required for T-cell receptor (TCR) signaling. Mediates TCR signaling events at the immune synapse. Activation by TCR leads to antigen-dependent memory T-cell migration and retention to antigenic tissues. Together with PIK3CG participates in T-cell development. Contributes to T-helper cell expansion and differentiation. Required for T-cell migration mediated by homing receptors SELL/CD62L, CCR7 and S1PR1 and antigen dependent recruitment of T-cells. Together with PIK3CG is involved in natural killer (NK) cell development and migration towards the sites of inflammation. Participates in NK cell receptor activation. Plays a role in NK cell maturation and cytokine production. Together with PIK3CG is involved in neutrophil chemotaxis and extravasation. Together with PIK3CG participates in neutrophil respiratory burst. Plays important roles in mast-cell development and mast cell mediated allergic response. Involved in stem cell factor (SCF)-mediated proliferation, adhesion and migration. Required for allergen-IgE-induced degranulation and cytokine release. The lipid kinase activity is required for its biological function. The polypeptide is Phosphatidylinositol 4,5-bisphosphate 3-kinase catalytic subunit delta isoform (Pik3cd) (Mus musculus (Mouse)).